The primary structure comprises 415 residues: Plasminogen activator inhibitor 2, macrophage (415 aa).

Residues N23, N75, N261, and N339 are each glycosylated (N-linked (GlcNAc...) asparagine).

This sequence belongs to the serpin family. Ov-serpin subfamily. As to quaternary structure, interacts with PSMB1. In terms of processing, the signal sequence is not cleaved.

Its subcellular location is the cytoplasm. It is found in the secreted. It localises to the extracellular space. Functionally, inhibits urokinase-type plasminogen activator. The monocyte derived PAI-2 is distinct from the endothelial cell-derived PAI-1. Not required for normal murine development or survival. The polypeptide is Plasminogen activator inhibitor 2, macrophage (Serpinb2) (Mus musculus (Mouse)).